The sequence spans 908 residues: Translation initiation factor IF-2 (908 aa).

Disordered stretches follow at residues 122-180 (PVVE…VDDA) and 203-267 (EKAR…AVKK). Residues 132 to 143 (VAAEPEVVEAPE) are compositionally biased toward acidic residues. Low complexity predominate over residues 157 to 166 (EEPAAPAAPV). A compositionally biased stretch (basic and acidic residues) spans 223–248 (AKEDARPTKHVEDLAKLKKPHDKKDE). Basic residues predominate over residues 256-267 (KHNKKAGKAVKK). The tr-type G domain maps to 409 to 578 (PRAPIVTVMG…ALQAELLELS (170 aa)). Residues 418 to 425 (GHVDHGKT) are G1. 418-425 (GHVDHGKT) is a GTP binding site. A G2 region spans residues 443–447 (GITQH). The tract at residues 464–467 (DTPG) is G3. GTP contacts are provided by residues 464 to 468 (DTPGH) and 518 to 521 (NKMD). A G4 region spans residues 518–521 (NKMD). The segment at 554–556 (SAH) is G5.

Belongs to the TRAFAC class translation factor GTPase superfamily. Classic translation factor GTPase family. IF-2 subfamily.

Its subcellular location is the cytoplasm. Functionally, one of the essential components for the initiation of protein synthesis. Protects formylmethionyl-tRNA from spontaneous hydrolysis and promotes its binding to the 30S ribosomal subunits. Also involved in the hydrolysis of GTP during the formation of the 70S ribosomal complex. The polypeptide is Translation initiation factor IF-2 (Saccharophagus degradans (strain 2-40 / ATCC 43961 / DSM 17024)).